A 394-amino-acid chain; its full sequence is Elongation factor Tu 2 (394 aa).

One can recognise a tr-type G domain in the interval 10-204 (KPHVNVGTIG…ALDNYIPEPE (195 aa)). Residues 19–26 (GHVDHGKT) form a G1 region. 19-26 (GHVDHGKT) contributes to the GTP binding site. Position 26 (Thr26) interacts with Mg(2+). A G2 region spans residues 60 to 64 (GITIS). Positions 81–84 (DCPG) are G3. Residues 81–85 (DCPGH) and 136–139 (NKCD) each bind GTP. A G4 region spans residues 136–139 (NKCD). The tract at residues 174–176 (SAL) is G5.

It belongs to the TRAFAC class translation factor GTPase superfamily. Classic translation factor GTPase family. EF-Tu/EF-1A subfamily. Monomer.

Its subcellular location is the cytoplasm. It carries out the reaction GTP + H2O = GDP + phosphate + H(+). GTP hydrolase that promotes the GTP-dependent binding of aminoacyl-tRNA to the A-site of ribosomes during protein biosynthesis. This Photobacterium profundum (strain SS9) protein is Elongation factor Tu 2.